The chain runs to 370 residues: uncharacterized protein (370 aa).

Transmembrane regions (helical) follow at residues 6-26 (AVVF…CLGN), 49-69 (IGIV…VAPF), 79-99 (SFAN…GEMA), 111-131 (FLGT…LGII), 143-163 (ILIG…CAGF), 167-187 (MIGK…FGLW), 206-226 (MVAI…IVLI), 236-256 (IQTT…TAFI), 307-327 (VAFA…VAGM), and 333-353 (AAMI…AAWM).

Belongs to the EutH family.

Its subcellular location is the cell membrane. This is an uncharacterized protein from Bacillus subtilis (strain 168).